We begin with the raw amino-acid sequence, 142 residues long: Large ribosomal subunit protein uL11 (142 aa).

It belongs to the universal ribosomal protein uL11 family. As to quaternary structure, part of the ribosomal stalk of the 50S ribosomal subunit. Interacts with L10 and the large rRNA to form the base of the stalk. L10 forms an elongated spine to which L12 dimers bind in a sequential fashion forming a multimeric L10(L12)X complex. In terms of processing, one or more lysine residues are methylated.

Forms part of the ribosomal stalk which helps the ribosome interact with GTP-bound translation factors. The polypeptide is Large ribosomal subunit protein uL11 (Mycoplasma mycoides subsp. mycoides SC (strain CCUG 32753 / NCTC 10114 / PG1)).